Here is a 240-residue protein sequence, read N- to C-terminus: Putative N-acetylmannosamine-6-phosphate 2-epimerase (240 aa).

It belongs to the NanE family.

The enzyme catalyses an N-acyl-D-glucosamine 6-phosphate = an N-acyl-D-mannosamine 6-phosphate. The protein operates within amino-sugar metabolism; N-acetylneuraminate degradation; D-fructose 6-phosphate from N-acetylneuraminate: step 3/5. Its function is as follows. Converts N-acetylmannosamine-6-phosphate (ManNAc-6-P) to N-acetylglucosamine-6-phosphate (GlcNAc-6-P). This Vibrio cholerae serotype O1 (strain ATCC 39541 / Classical Ogawa 395 / O395) protein is Putative N-acetylmannosamine-6-phosphate 2-epimerase.